A 318-amino-acid chain; its full sequence is Peroxisomal and mitochondrial division factor 1 (318 aa).

Residues Met1 to Leu39 form a disordered region. Residues Met1–Gln291 are Cytoplasmic-facing. Residues Gly19–Val260 adopt a coiled-coil conformation. The span at Thr23–Leu39 shows a compositional bias: basic and acidic residues. A helical transmembrane segment spans residues Trp292–Val312. The Mitochondrial intermembrane segment spans residues Cys313–Arg318.

Homodimer. Interacts with PMD2.

Its subcellular location is the peroxisome membrane. It is found in the mitochondrion outer membrane. Involved in morphogenesis and proliferation of peroxisomes and mitochondria, independently from the previously defined pathway controlled by the FIS1-DRP3 complex. The sequence is that of Peroxisomal and mitochondrial division factor 1 from Arabidopsis thaliana (Mouse-ear cress).